The following is a 148-amino-acid chain: Large ribosomal subunit protein bL9 (148 aa).

Belongs to the bacterial ribosomal protein bL9 family.

Binds to the 23S rRNA. This Lysinibacillus sphaericus (strain C3-41) protein is Large ribosomal subunit protein bL9.